A 156-amino-acid polypeptide reads, in one-letter code: MRVVSVLGLDVGSKRIGVAGCDPTGLIASGLETIVRCNLGADLDAIRHWIERRRAQAVVIGLPRNMNGSLGPQAHRIQHFGQQLARVIDVPIDYVDERLSTVQAGRALQSVSATRRKALIDQQAAAIILQQWLDIRRCQHRPTQESLDERHIDTER.

This sequence belongs to the YqgF nuclease family.

It localises to the cytoplasm. Could be a nuclease involved in processing of the 5'-end of pre-16S rRNA. This is Putative pre-16S rRNA nuclease from Gloeobacter violaceus (strain ATCC 29082 / PCC 7421).